Here is a 125-residue protein sequence, read N- to C-terminus: Large ribosomal subunit protein bL12 (125 aa).

This sequence belongs to the bacterial ribosomal protein bL12 family. In terms of assembly, homodimer. Part of the ribosomal stalk of the 50S ribosomal subunit. Forms a multimeric L10(L12)X complex, where L10 forms an elongated spine to which 2 to 4 L12 dimers bind in a sequential fashion. Binds GTP-bound translation factors.

In terms of biological role, forms part of the ribosomal stalk which helps the ribosome interact with GTP-bound translation factors. Is thus essential for accurate translation. In Delftia acidovorans (strain DSM 14801 / SPH-1), this protein is Large ribosomal subunit protein bL12.